The sequence spans 133 residues: uncharacterized protein (133 aa).

The helical transmembrane segment at 36 to 56 threads the bilayer; that stretch reads LPMLIALACIFLLLATCLLFM. Residues 105-133 form a disordered region; that stretch reads HGRPTVPRQPLPGPEDNRSHCDYMESTKM. Residues 119-133 are compositionally biased toward basic and acidic residues; the sequence is EDNRSHCDYMESTKM.

The protein localises to the membrane. This is an uncharacterized protein from Homo sapiens (Human).